Consider the following 370-residue polypeptide: Histidinol-phosphate aminotransferase 1 (370 aa).

Lysine 229 is modified (N6-(pyridoxal phosphate)lysine).

It belongs to the class-II pyridoxal-phosphate-dependent aminotransferase family. Histidinol-phosphate aminotransferase subfamily. Homodimer. Requires pyridoxal 5'-phosphate as cofactor.

It catalyses the reaction L-histidinol phosphate + 2-oxoglutarate = 3-(imidazol-4-yl)-2-oxopropyl phosphate + L-glutamate. Its pathway is amino-acid biosynthesis; L-histidine biosynthesis; L-histidine from 5-phospho-alpha-D-ribose 1-diphosphate: step 7/9. This is Histidinol-phosphate aminotransferase 1 from Nitrosococcus oceani (strain ATCC 19707 / BCRC 17464 / JCM 30415 / NCIMB 11848 / C-107).